A 178-amino-acid polypeptide reads, in one-letter code: ATP synthase subunit delta (178 aa).

It belongs to the ATPase delta chain family. As to quaternary structure, F-type ATPases have 2 components, F(1) - the catalytic core - and F(0) - the membrane proton channel. F(1) has five subunits: alpha(3), beta(3), gamma(1), delta(1), epsilon(1). F(0) has three main subunits: a(1), b(2) and c(10-14). The alpha and beta chains form an alternating ring which encloses part of the gamma chain. F(1) is attached to F(0) by a central stalk formed by the gamma and epsilon chains, while a peripheral stalk is formed by the delta and b chains.

Its subcellular location is the cell inner membrane. Its function is as follows. F(1)F(0) ATP synthase produces ATP from ADP in the presence of a proton or sodium gradient. F-type ATPases consist of two structural domains, F(1) containing the extramembraneous catalytic core and F(0) containing the membrane proton channel, linked together by a central stalk and a peripheral stalk. During catalysis, ATP synthesis in the catalytic domain of F(1) is coupled via a rotary mechanism of the central stalk subunits to proton translocation. Functionally, this protein is part of the stalk that links CF(0) to CF(1). It either transmits conformational changes from CF(0) to CF(1) or is implicated in proton conduction. The protein is ATP synthase subunit delta of Pseudomonas fluorescens (strain ATCC BAA-477 / NRRL B-23932 / Pf-5).